The primary structure comprises 592 residues: Putative D-/L-hydantoinase subunit B (592 aa).

This sequence belongs to the HyuB family. As to quaternary structure, may form a complex with HyuA.

Functionally, involved in the asymmetric conversion of racemic 5-substituted hydantoins to the corresponding L-amino acids. HyuA and HyuB are both required for the conversion of D- and L-5-substituted hydantoins to corresponding N-carbamoyl-D- and N-carbamoyl-L-amino acids, respectively. The protein is Putative D-/L-hydantoinase subunit B of Pseudomonas sp. (strain NS671).